Consider the following 335-residue polypeptide: S-adenosylmethionine:tRNA ribosyltransferase-isomerase (335 aa).

This sequence belongs to the QueA family. As to quaternary structure, monomer.

The protein localises to the cytoplasm. The enzyme catalyses 7-aminomethyl-7-carbaguanosine(34) in tRNA + S-adenosyl-L-methionine = epoxyqueuosine(34) in tRNA + adenine + L-methionine + 2 H(+). Its pathway is tRNA modification; tRNA-queuosine biosynthesis. Its function is as follows. Transfers and isomerizes the ribose moiety from AdoMet to the 7-aminomethyl group of 7-deazaguanine (preQ1-tRNA) to give epoxyqueuosine (oQ-tRNA). This chain is S-adenosylmethionine:tRNA ribosyltransferase-isomerase, found in Thermosipho africanus (strain TCF52B).